Consider the following 150-residue polypeptide: MKVIFLVDVKGKGKKGEIKEVPTGYAQNFLIKKNLAREASSQAIGQLRGQQKAEEKAQAEILAEAKAVKKILDDEKTRVQFKEKVGPDGRTFGSITAKKISEELQKQFKVKVDKRHIVLDHPIRAIGLIEVPVKLHKEVIAEIKLNIAEA.

The protein belongs to the bacterial ribosomal protein bL9 family.

Binds to the 23S rRNA. The polypeptide is Large ribosomal subunit protein bL9 (Streptococcus equi subsp. zooepidemicus (strain MGCS10565)).